The chain runs to 256 residues: GTP cyclohydrolase FolE2 (256 aa).

The protein belongs to the GTP cyclohydrolase IV family.

The enzyme catalyses GTP + H2O = 7,8-dihydroneopterin 3'-triphosphate + formate + H(+). It functions in the pathway cofactor biosynthesis; 7,8-dihydroneopterin triphosphate biosynthesis; 7,8-dihydroneopterin triphosphate from GTP: step 1/1. In terms of biological role, converts GTP to 7,8-dihydroneopterin triphosphate. In Maridesulfovibrio salexigens (strain ATCC 14822 / DSM 2638 / NCIMB 8403 / VKM B-1763) (Desulfovibrio salexigens), this protein is GTP cyclohydrolase FolE2.